Here is a 419-residue protein sequence, read N- to C-terminus: Enolase (419 aa).

Glutamine 161 contacts (2R)-2-phosphoglycerate. Glutamate 205 acts as the Proton donor in catalysis. The Mg(2+) site is built by aspartate 240, glutamate 283, and aspartate 309. (2R)-2-phosphoglycerate-binding residues include lysine 334, arginine 363, serine 364, and lysine 385. The Proton acceptor role is filled by lysine 334.

Belongs to the enolase family. The cofactor is Mg(2+).

It localises to the cytoplasm. Its subcellular location is the secreted. The protein localises to the cell surface. The catalysed reaction is (2R)-2-phosphoglycerate = phosphoenolpyruvate + H2O. Its pathway is carbohydrate degradation; glycolysis; pyruvate from D-glyceraldehyde 3-phosphate: step 4/5. In terms of biological role, catalyzes the reversible conversion of 2-phosphoglycerate (2-PG) into phosphoenolpyruvate (PEP). It is essential for the degradation of carbohydrates via glycolysis. This is Enolase from Saccharolobus islandicus (strain M.16.27) (Sulfolobus islandicus).